The following is a 347-amino-acid chain: Protein RecA (347 aa).

67 to 74 contributes to the ATP binding site; it reads GPESSGKT.

The protein belongs to the RecA family.

The protein localises to the cytoplasm. Can catalyze the hydrolysis of ATP in the presence of single-stranded DNA, the ATP-dependent uptake of single-stranded DNA by duplex DNA, and the ATP-dependent hybridization of homologous single-stranded DNAs. It interacts with LexA causing its activation and leading to its autocatalytic cleavage. In Paenarthrobacter aurescens (strain TC1), this protein is Protein RecA.